The following is a 93-amino-acid chain: CRISPR-associated endoribonuclease Cas2 2 (93 aa).

Residue D9 coordinates Mg(2+).

Belongs to the CRISPR-associated endoribonuclease Cas2 protein family. As to quaternary structure, homodimer, forms a heterotetramer with a Cas1 homodimer. It depends on Mg(2+) as a cofactor.

Its function is as follows. CRISPR (clustered regularly interspaced short palindromic repeat), is an adaptive immune system that provides protection against mobile genetic elements (viruses, transposable elements and conjugative plasmids). CRISPR clusters contain sequences complementary to antecedent mobile elements and target invading nucleic acids. CRISPR clusters are transcribed and processed into CRISPR RNA (crRNA). Functions as a ssRNA-specific endoribonuclease. Involved in the integration of spacer DNA into the CRISPR cassette. The protein is CRISPR-associated endoribonuclease Cas2 2 of Synechocystis sp. (strain ATCC 27184 / PCC 6803 / Kazusa).